Here is a 473-residue protein sequence, read N- to C-terminus: Photosystem II CP43 reaction center protein (473 aa).

Positions 1–14 are excised as a propeptide; it reads MKTLYSLRRFYHVE. The residue at position 15 (threonine 15) is an N-acetylthreonine. The residue at position 15 (threonine 15) is a Phosphothreonine. Transmembrane regions (helical) follow at residues 69–93, 134–155, 178–200, 255–275, and 291–312; these read LFEV…PHLA, LLGP…KDRN, KALY…RKIT, KPFA…LSYS, and WFNN…ASQA. Residue glutamate 367 participates in [CaMn4O5] cluster binding. The chain crosses the membrane as a helical span at residues 447-471; sequence RARAAAAGFEKGIDRDFEPVLSMTP.

Belongs to the PsbB/PsbC family. PsbC subfamily. In terms of assembly, PSII is composed of 1 copy each of membrane proteins PsbA, PsbB, PsbC, PsbD, PsbE, PsbF, PsbH, PsbI, PsbJ, PsbK, PsbL, PsbM, PsbT, PsbX, PsbY, PsbZ, Psb30/Ycf12, at least 3 peripheral proteins of the oxygen-evolving complex and a large number of cofactors. It forms dimeric complexes. Requires Binds multiple chlorophylls and provides some of the ligands for the Ca-4Mn-5O cluster of the oxygen-evolving complex. It may also provide a ligand for a Cl- that is required for oxygen evolution. PSII binds additional chlorophylls, carotenoids and specific lipids. as cofactor.

The protein localises to the plastid. It is found in the chloroplast thylakoid membrane. In terms of biological role, one of the components of the core complex of photosystem II (PSII). It binds chlorophyll and helps catalyze the primary light-induced photochemical processes of PSII. PSII is a light-driven water:plastoquinone oxidoreductase, using light energy to abstract electrons from H(2)O, generating O(2) and a proton gradient subsequently used for ATP formation. The sequence is that of Photosystem II CP43 reaction center protein from Phaseolus vulgaris (Kidney bean).